The primary structure comprises 426 residues: Gamma-glutamyl phosphate reductase (426 aa).

This sequence belongs to the gamma-glutamyl phosphate reductase family.

It localises to the cytoplasm. The enzyme catalyses L-glutamate 5-semialdehyde + phosphate + NADP(+) = L-glutamyl 5-phosphate + NADPH + H(+). It functions in the pathway amino-acid biosynthesis; L-proline biosynthesis; L-glutamate 5-semialdehyde from L-glutamate: step 2/2. In terms of biological role, catalyzes the NADPH-dependent reduction of L-glutamate 5-phosphate into L-glutamate 5-semialdehyde and phosphate. The product spontaneously undergoes cyclization to form 1-pyrroline-5-carboxylate. The sequence is that of Gamma-glutamyl phosphate reductase from Ralstonia nicotianae (strain ATCC BAA-1114 / GMI1000) (Ralstonia solanacearum).